Consider the following 461-residue polypeptide: CASP-like protein 4U1 (461 aa).

Residues 1-239 are disordered; it reads MASTPRTPAP…RAAETKLPLS (239 aa). Residues 1 to 314 lie on the Cytoplasmic side of the membrane; that stretch reads MASTPRTPAP…AAVAVGERRE (314 aa). Residues 7–69 show a composition bias toward pro residues; the sequence is TPAPVRSPPP…PLETPPPPSP (63 aa). Composition is skewed to low complexity over residues 116–126 and 135–155; these read LSPMRLAAPRL and TPTGQNGQEEQEGGAKAAAAG. A compositionally biased stretch (pro residues) spans 193–204; that stretch reads SPSPSPTPPSPL. Residues 205–221 are compositionally biased toward low complexity; the sequence is TPAAAPVVNNNSNNKNN. A helical transmembrane segment spans residues 315-335; sequence LSVTLRLATAVLSLAAFSVIA. Residues 336–354 lie on the Extracellular side of the membrane; it reads SARTSGWAGDYYAHHLQYR. Residues 355–375 form a helical membrane-spanning segment; the sequence is YAVAVNVIVCAYSIAQSFGEI. The Cytoplasmic portion of the chain corresponds to 376–392; it reads RRLISPRFIFRSMSSYY. A helical membrane pass occupies residues 393 to 413; sequence CSLFLDQALAYLLMSASSAAA. Topologically, residues 414 to 431 are extracellular; it reads SRNDLWVSRFGTDAFNRK. Residues 432-452 form a helical membrane-spanning segment; it reads ITSALWLSFIAFLMLALNALI. Topologically, residues 453–461 are cytoplasmic; it reads STANLFSML.

This sequence belongs to the Casparian strip membrane proteins (CASP) family. As to quaternary structure, homodimer and heterodimers.

It localises to the cell membrane. In Sorghum bicolor (Sorghum), this protein is CASP-like protein 4U1.